Reading from the N-terminus, the 302-residue chain is Ornithine carbamoyltransferase (302 aa).

Carbamoyl phosphate contacts are provided by residues 52–55, Q79, R103, and 130–133; these read STRT and HPCQ. L-ornithine-binding positions include N161, D221, and 225–226; that span reads SM. Residues 261–262 and R289 each bind carbamoyl phosphate; that span reads CL.

The protein belongs to the aspartate/ornithine carbamoyltransferase superfamily. OTCase family.

It localises to the cytoplasm. It carries out the reaction carbamoyl phosphate + L-ornithine = L-citrulline + phosphate + H(+). Its pathway is amino-acid biosynthesis; L-arginine biosynthesis; L-arginine from L-ornithine and carbamoyl phosphate: step 1/3. In terms of biological role, reversibly catalyzes the transfer of the carbamoyl group from carbamoyl phosphate (CP) to the N(epsilon) atom of ornithine (ORN) to produce L-citrulline. This Methanosarcina acetivorans (strain ATCC 35395 / DSM 2834 / JCM 12185 / C2A) protein is Ornithine carbamoyltransferase.